The following is a 225-amino-acid chain: Cytidylate kinase (225 aa).

11-19 (GPAAAGKST) is an ATP binding site.

It belongs to the cytidylate kinase family. Type 1 subfamily.

It is found in the cytoplasm. It carries out the reaction CMP + ATP = CDP + ADP. The enzyme catalyses dCMP + ATP = dCDP + ADP. This is Cytidylate kinase from Bacillus anthracis (strain A0248).